The chain runs to 780 residues: RNA-binding protein Pasilla (780 aa).

Disordered stretches follow at residues 31-50 (LQHQ…QQLE), 76-113 (QPRH…SSSI), and 150-190 (QIES…ATAS). Composition is skewed to low complexity over residues 79 to 91 (HSTT…STHS), 99 to 113 (SSNS…SSSI), and 176 to 190 (PNGT…ATAS). KH domains lie at 273 to 340 (TYHM…MEFI), 366 to 432 (DKQV…CKMI), and 691 to 758 (KDSK…QYLI). Positions 674 to 693 (AQLGGLSKSPTPGDLSSKDS) are disordered. A required for RNA binding region spans residues 686 to 776 (GDLSSKDSKN…TKRARQIPLT (91 aa)).

Expressed in the central nervous system in mushroom body neurons (at protein level).

The protein localises to the nucleus. The protein resides in the cytoplasm. Functions to regulate alternative splicing in neurons by binding pre-mRNA in a sequence-specific manner to activate exon inclusion. Plays a role in long-term memory formation by processing the unspliced Orb2-isoform A (Orb2A) mRNA and thereby controlling Orb2A protein abundance. In Drosophila melanogaster (Fruit fly), this protein is RNA-binding protein Pasilla.